The sequence spans 272 residues: 3-methyl-2-oxobutanoate hydroxymethyltransferase (272 aa).

Aspartate 53 and aspartate 92 together coordinate Mg(2+). Residues 53 to 54, aspartate 92, and lysine 120 each bind 3-methyl-2-oxobutanoate; that span reads DS. Residue glutamate 122 participates in Mg(2+) binding. The active-site Proton acceptor is the glutamate 189.

The protein belongs to the PanB family. Homodecamer; pentamer of dimers. The cofactor is Mg(2+).

The protein resides in the cytoplasm. It carries out the reaction 3-methyl-2-oxobutanoate + (6R)-5,10-methylene-5,6,7,8-tetrahydrofolate + H2O = 2-dehydropantoate + (6S)-5,6,7,8-tetrahydrofolate. It participates in cofactor biosynthesis; (R)-pantothenate biosynthesis; (R)-pantoate from 3-methyl-2-oxobutanoate: step 1/2. In terms of biological role, catalyzes the reversible reaction in which hydroxymethyl group from 5,10-methylenetetrahydrofolate is transferred onto alpha-ketoisovalerate to form ketopantoate. The chain is 3-methyl-2-oxobutanoate hydroxymethyltransferase from Ralstonia pickettii (strain 12J).